Here is a 101-residue protein sequence, read N- to C-terminus: Interleukin-8 (101 aa).

A signal peptide spans 1–22 (MTSKLAVALLAAFLLSAALCEA). Arg-27 is subject to Citrulline. Intrachain disulfides connect Cys-34–Cys-61 and Cys-36–Cys-77.

This sequence belongs to the intercrine alpha (chemokine CxC) family. Homodimer. Interacts with TNFAIP6 (via Link domain); this interaction interferes with chemokine binding to glycosaminoglycans. Post-translationally, citrullination at Arg-27 prevents proteolysis, and dampens tissue inflammation, it also enhances leukocytosis, possibly through impaired chemokine clearance from the blood circulation.

The protein localises to the secreted. Its function is as follows. Chemotactic factor that mediates inflammatory response by attracting neutrophils, basophils, and T-cells to clear pathogens and protect the host from infection. Also plays an important role in neutrophil activation. Released in response to an inflammatory stimulus, exerts its effect by binding to the G-protein-coupled receptors CXCR1 and CXCR2, primarily found in neutrophils, monocytes and endothelial cells. G-protein heterotrimer (alpha, beta, gamma subunits) constitutively binds to CXCR1/CXCR2 receptor and activation by IL8 leads to beta and gamma subunits release from Galpha (GNAI2 in neutrophils) and activation of several downstream signaling pathways including PI3K and MAPK pathways. This is Interleukin-8 (CXCL8) from Ovis aries (Sheep).